Consider the following 211-residue polypeptide: NADH-quinone oxidoreductase subunit I 1 (211 aa).

4Fe-4S ferredoxin-type domains follow at residues 50-80 (LNRHPDGLEKCVGCELCAWACPADAIYVEGA) and 96-125 (RVYQINYARCILCGLCIEACPTRALTMTNE). Positions 60, 63, 66, 70, 105, 108, 111, and 115 each coordinate [4Fe-4S] cluster. Residues 192–211 (QEGDSTFGATEPASEEVIRR) form a disordered region.

This sequence belongs to the complex I 23 kDa subunit family. As to quaternary structure, NDH-1 is composed of 14 different subunits. Subunits NuoA, H, J, K, L, M, N constitute the membrane sector of the complex. It depends on [4Fe-4S] cluster as a cofactor.

The protein localises to the cell membrane. It catalyses the reaction a quinone + NADH + 5 H(+)(in) = a quinol + NAD(+) + 4 H(+)(out). Its function is as follows. NDH-1 shuttles electrons from NADH, via FMN and iron-sulfur (Fe-S) centers, to quinones in the respiratory chain. The immediate electron acceptor for the enzyme in this species is believed to be ubiquinone. Couples the redox reaction to proton translocation (for every two electrons transferred, four hydrogen ions are translocated across the cytoplasmic membrane), and thus conserves the redox energy in a proton gradient. The chain is NADH-quinone oxidoreductase subunit I 1 from Streptomyces coelicolor (strain ATCC BAA-471 / A3(2) / M145).